A 548-amino-acid chain; its full sequence is Chaperonin GroEL (548 aa).

ATP is bound by residues 30–33 (TLGP), K51, 87–91 (DGTTT), G415, 478–480 (NAA), and D494.

This sequence belongs to the chaperonin (HSP60) family. In terms of assembly, forms a cylinder of 14 subunits composed of two heptameric rings stacked back-to-back. Interacts with the co-chaperonin GroES.

Its subcellular location is the cytoplasm. The catalysed reaction is ATP + H2O + a folded polypeptide = ADP + phosphate + an unfolded polypeptide.. Functionally, together with its co-chaperonin GroES, plays an essential role in assisting protein folding. The GroEL-GroES system forms a nano-cage that allows encapsulation of the non-native substrate proteins and provides a physical environment optimized to promote and accelerate protein folding. The polypeptide is Chaperonin GroEL (Trichlorobacter lovleyi (strain ATCC BAA-1151 / DSM 17278 / SZ) (Geobacter lovleyi)).